The chain runs to 496 residues: Probable malate:quinone oxidoreductase (496 aa).

The protein belongs to the MQO family. The cofactor is FAD.

It carries out the reaction (S)-malate + a quinone = a quinol + oxaloacetate. It functions in the pathway carbohydrate metabolism; tricarboxylic acid cycle; oxaloacetate from (S)-malate (quinone route): step 1/1. In Prochlorococcus marinus (strain NATL2A), this protein is Probable malate:quinone oxidoreductase.